A 463-amino-acid chain; its full sequence is tRNA (guanine(37)-N(1))-methyltransferase (463 aa).

S-adenosyl-L-methionine contacts are provided by residues His207, Asp245–Leu246, Asp274–Gly275, and Asn305.

This sequence belongs to the class I-like SAM-binding methyltransferase superfamily. TRM5/TYW2 family. In terms of assembly, monomer.

It localises to the mitochondrion matrix. The protein localises to the nucleus. It is found in the cytoplasm. It carries out the reaction guanosine(37) in tRNA + S-adenosyl-L-methionine = N(1)-methylguanosine(37) in tRNA + S-adenosyl-L-homocysteine + H(+). Functionally, specifically methylates the N1 position of guanosine-37 in various cytoplasmic and mitochondrial tRNAs. Methylation is not dependent on the nature of the nucleoside 5' of the target nucleoside. This is the first step in the biosynthesis of wybutosine (yW), a modified base adjacent to the anticodon of tRNAs and required for accurate decoding. The protein is tRNA (guanine(37)-N(1))-methyltransferase of Pediculus humanus subsp. corporis (Body louse).